The chain runs to 364 residues: Ribosomal RNA large subunit methyltransferase M (364 aa).

S-adenosyl-L-methionine contacts are provided by residues Ser187, 220-223 (CPGG), Asp239, Asp259, and Asp276. Lys305 acts as the Proton acceptor in catalysis.

This sequence belongs to the class I-like SAM-binding methyltransferase superfamily. RNA methyltransferase RlmE family. RlmM subfamily. Monomer.

The protein resides in the cytoplasm. The catalysed reaction is cytidine(2498) in 23S rRNA + S-adenosyl-L-methionine = 2'-O-methylcytidine(2498) in 23S rRNA + S-adenosyl-L-homocysteine + H(+). In terms of biological role, catalyzes the 2'-O-methylation at nucleotide C2498 in 23S rRNA. The polypeptide is Ribosomal RNA large subunit methyltransferase M (Aeromonas hydrophila subsp. hydrophila (strain ATCC 7966 / DSM 30187 / BCRC 13018 / CCUG 14551 / JCM 1027 / KCTC 2358 / NCIMB 9240 / NCTC 8049)).